The primary structure comprises 156 residues: Snaclec A4 (156 aa).

Positions 1–23 (MGRSISVSFGLLVVFLSLSGTGA) are cleaved as a signal peptide. A disulfide bridge links C27 with C38. The 122-residue stretch at 34–155 (HEGHCYKVFN…CGQPYRFTCE (122 aa)) folds into the C-type lectin domain. N45 carries N-linked (GlcNAc...) asparagine glycosylation. Disulfide bonds link C55/C154 and C129/C146.

The protein belongs to the snaclec family. In terms of assembly, heterodimer; disulfide-linked. As to expression, expressed by the venom gland.

It is found in the secreted. Functionally, interferes with one step of hemostasis (modulation of platelet aggregation, or coagulation cascade, for example). This chain is Snaclec A4, found in Macrovipera lebetinus (Levantine viper).